Here is a 498-residue protein sequence, read N- to C-terminus: ATP synthase subunit beta, chloroplastic (498 aa).

Position 172 to 179 (172 to 179) interacts with ATP; sequence GGAGVGKT.

This sequence belongs to the ATPase alpha/beta chains family. In terms of assembly, F-type ATPases have 2 components, CF(1) - the catalytic core - and CF(0) - the membrane proton channel. CF(1) has five subunits: alpha(3), beta(3), gamma(1), delta(1), epsilon(1). CF(0) has four main subunits: a(1), b(1), b'(1) and c(9-12).

The protein localises to the plastid. It is found in the chloroplast thylakoid membrane. It catalyses the reaction ATP + H2O + 4 H(+)(in) = ADP + phosphate + 5 H(+)(out). Its function is as follows. Produces ATP from ADP in the presence of a proton gradient across the membrane. The catalytic sites are hosted primarily by the beta subunits. The sequence is that of ATP synthase subunit beta, chloroplastic from Aristolochia macrophylla (Dutchman's pipe vine).